We begin with the raw amino-acid sequence, 107 residues long: ATP-dependent Clp protease adapter protein ClpS (107 aa).

The protein belongs to the ClpS family. As to quaternary structure, binds to the N-terminal domain of the chaperone ClpA.

Functionally, involved in the modulation of the specificity of the ClpAP-mediated ATP-dependent protein degradation. This chain is ATP-dependent Clp protease adapter protein ClpS, found in Syntrophus aciditrophicus (strain SB).